The primary structure comprises 193 residues: Probable GTP-binding protein EngB (193 aa).

The EngB-type G domain maps to 22 to 193; that stretch reads MYPEISFIGR…ELWQIIEDLL (172 aa). GTP-binding positions include 30–37, 57–61, 75–78, 142–145, and 174–176; these read GRSNVGKS, GKTRT, DLPG, TKMD, and FSS. Mg(2+) contacts are provided by S37 and T59.

The protein belongs to the TRAFAC class TrmE-Era-EngA-EngB-Septin-like GTPase superfamily. EngB GTPase family. The cofactor is Mg(2+).

Its function is as follows. Necessary for normal cell division and for the maintenance of normal septation. This is Probable GTP-binding protein EngB from Natranaerobius thermophilus (strain ATCC BAA-1301 / DSM 18059 / JW/NM-WN-LF).